A 450-amino-acid chain; its full sequence is Signal recognition particle protein (450 aa).

Residues 107–114 (GLQGVGKT), 190–194 (DTAGR), and 248–251 (TKTD) each bind GTP.

This sequence belongs to the GTP-binding SRP family. SRP54 subfamily. As to quaternary structure, part of the signal recognition particle protein translocation system, which is composed of SRP and FtsY. SRP is a ribonucleoprotein composed of Ffh and a 4.5S RNA molecule.

It is found in the cytoplasm. It catalyses the reaction GTP + H2O = GDP + phosphate + H(+). Functionally, involved in targeting and insertion of nascent membrane proteins into the cytoplasmic membrane. Binds to the hydrophobic signal sequence of the ribosome-nascent chain (RNC) as it emerges from the ribosomes. The SRP-RNC complex is then targeted to the cytoplasmic membrane where it interacts with the SRP receptor FtsY. Interaction with FtsY leads to the transfer of the RNC complex to the Sec translocase for insertion into the membrane, the hydrolysis of GTP by both Ffh and FtsY, and the dissociation of the SRP-FtsY complex into the individual components. The polypeptide is Signal recognition particle protein (Buchnera aphidicola subsp. Schizaphis graminum (strain Sg)).